The chain runs to 113 residues: Large ribosomal subunit protein bL17 (113 aa).

Belongs to the bacterial ribosomal protein bL17 family. Part of the 50S ribosomal subunit. Contacts protein L32.

This Natranaerobius thermophilus (strain ATCC BAA-1301 / DSM 18059 / JW/NM-WN-LF) protein is Large ribosomal subunit protein bL17.